The following is a 409-amino-acid chain: CUB domain-containing protein (409 aa).

An N-terminal signal peptide occupies residues 1–18 (MFLFSLTVLSALVLITES). The span at 154-229 (TEASTTAQET…TTAPTTAPAP (76 aa)) shows a compositional bias: low complexity. The interval 154–230 (TEASTTAQET…TAPTTAPAPI (77 aa)) is disordered. An intrachain disulfide couples Cys232 to Cys257. Residues 232–338 (CGGVLRGRGT…QEYVDYYYYD (107 aa)) form the CUB domain. Positions 389–409 (VQGAADSESEASASSESSDED) are disordered. The span at 392 to 409 (AADSESEASASSESSDED) shows a compositional bias: low complexity.

In terms of tissue distribution, component of the acid-insoluble and acid-soluble organic matrix of the aragonitic skeleton (at protein level).

Its subcellular location is the secreted. The polypeptide is CUB domain-containing protein (Acropora millepora (Staghorn coral)).